A 204-amino-acid polypeptide reads, in one-letter code: Dephospho-CoA kinase (204 aa).

Positions R12–C204 constitute a DPCK domain. A20–S25 is an ATP binding site.

The protein belongs to the CoaE family.

Its subcellular location is the cytoplasm. It carries out the reaction 3'-dephospho-CoA + ATP = ADP + CoA + H(+). Its pathway is cofactor biosynthesis; coenzyme A biosynthesis; CoA from (R)-pantothenate: step 5/5. Functionally, catalyzes the phosphorylation of the 3'-hydroxyl group of dephosphocoenzyme A to form coenzyme A. This Prochlorococcus marinus (strain MIT 9313) protein is Dephospho-CoA kinase.